Consider the following 350-residue polypeptide: Holliday junction branch migration complex subunit RuvB (350 aa).

The large ATPase domain (RuvB-L) stretch occupies residues alanine 4–tyrosine 184. Residues isoleucine 23, arginine 24, glycine 65, lysine 68, threonine 69, threonine 70, glutamate 131–phenylalanine 133, arginine 174, tyrosine 184, and arginine 221 each bind ATP. Residue threonine 69 participates in Mg(2+) binding. The small ATPAse domain (RuvB-S) stretch occupies residues serine 185–aspartate 255. The segment at glutamate 258–valine 350 is head domain (RuvB-H). The DNA site is built by arginine 294, arginine 313, and arginine 318.

It belongs to the RuvB family. Homohexamer. Forms an RuvA(8)-RuvB(12)-Holliday junction (HJ) complex. HJ DNA is sandwiched between 2 RuvA tetramers; dsDNA enters through RuvA and exits via RuvB. An RuvB hexamer assembles on each DNA strand where it exits the tetramer. Each RuvB hexamer is contacted by two RuvA subunits (via domain III) on 2 adjacent RuvB subunits; this complex drives branch migration. In the full resolvosome a probable DNA-RuvA(4)-RuvB(12)-RuvC(2) complex forms which resolves the HJ.

The protein resides in the cytoplasm. The catalysed reaction is ATP + H2O = ADP + phosphate + H(+). The RuvA-RuvB-RuvC complex processes Holliday junction (HJ) DNA during genetic recombination and DNA repair, while the RuvA-RuvB complex plays an important role in the rescue of blocked DNA replication forks via replication fork reversal (RFR). RuvA specifically binds to HJ cruciform DNA, conferring on it an open structure. The RuvB hexamer acts as an ATP-dependent pump, pulling dsDNA into and through the RuvAB complex. RuvB forms 2 homohexamers on either side of HJ DNA bound by 1 or 2 RuvA tetramers; 4 subunits per hexamer contact DNA at a time. Coordinated motions by a converter formed by DNA-disengaged RuvB subunits stimulates ATP hydrolysis and nucleotide exchange. Immobilization of the converter enables RuvB to convert the ATP-contained energy into a lever motion, pulling 2 nucleotides of DNA out of the RuvA tetramer per ATP hydrolyzed, thus driving DNA branch migration. The RuvB motors rotate together with the DNA substrate, which together with the progressing nucleotide cycle form the mechanistic basis for DNA recombination by continuous HJ branch migration. Branch migration allows RuvC to scan DNA until it finds its consensus sequence, where it cleaves and resolves cruciform DNA. The sequence is that of Holliday junction branch migration complex subunit RuvB from Stutzerimonas stutzeri (strain A1501) (Pseudomonas stutzeri).